The following is a 181-amino-acid chain: Protein Syd (181 aa).

The protein belongs to the Syd family.

It is found in the cell inner membrane. Functionally, interacts with the SecY protein in vivo. May bind preferentially to an uncomplexed state of SecY, thus functioning either as a chelating agent for excess SecY in the cell or as a regulatory factor that negatively controls the translocase function. The chain is Protein Syd from Shigella flexneri serotype 5b (strain 8401).